Consider the following 202-residue polypeptide: Complement component C8 gamma chain (202 aa).

A signal peptide spans 1-20 (MLPPGTATLLTLLLAAGSLG). The residue at position 21 (Gln21) is a Pyrrolidone carboxylic acid. Cys96 and Cys188 are disulfide-bonded.

This sequence belongs to the calycin superfamily. Lipocalin family. As to quaternary structure, heterotrimer of 3 chains: alpha (C8A), beta (C8B) and gamma (C8G); the alpha and gamma chains are disulfide bonded. Component of the membrane attack complex (MAC), composed of complement C5b, C6, C7, C8A, C8B, C8G and multiple copies of the pore-forming subunit C9.

The protein localises to the secreted. It localises to the target cell membrane. Its activity is regulated as follows. Membrane attack complex (MAC) assembly is inhibited by CD59, thereby protecting self-cells from damage during complement activation. MAC assembly is also inhibited by clusterin (CLU) chaperones that inhibit polymerization of C9. In terms of biological role, component of the membrane attack complex (MAC), a multiprotein complex activated by the complement cascade, which inserts into a target cell membrane and forms a pore, leading to target cell membrane rupture and cell lysis. The MAC is initiated by proteolytic cleavage of C5 into complement C5b in response to the classical, alternative, lectin and GZMK complement pathways. The complement pathways consist in a cascade of proteins that leads to phagocytosis and breakdown of pathogens and signaling that strengthens the adaptive immune system. C8G, together with C8A and C8B, inserts into the target membrane, but does not form pores by itself. During MAC assembly, associates with C5b, C6 and C7 to form the C5b8 intermediate complex that inserts into the target membrane and traverses the bilayer increasing membrane rigidity. The protein is Complement component C8 gamma chain of Homo sapiens (Human).